Reading from the N-terminus, the 251-residue chain is Derlin-1 (251 aa).

The residue at position 2 (Ser2) is an N-acetylserine. Over 2–15 the chain is Cytoplasmic; it reads SDIGDWFRSIPAIT. The helical transmembrane segment at 16-31 threads the bilayer; that stretch reads RYWFAATVAVPLVGKL. Residues 32–69 lie on the Lumenal side of the membrane; the sequence is GLISPAYLFLWPEAFLYRFQIWRPITATFYFPVGPGTG. Residues 70 to 89 traverse the membrane as a helical segment; it reads FLYLVNLYFLYHYSTRLETG. The Cytoplasmic segment spans residues 90 to 94; that stretch reads AFDGR. The helical transmembrane segment at 95 to 115 threads the bilayer; it reads PADYLFMLLFNWICIVITGLA. Over 116–122 the chain is Lumenal; that stretch reads MDMQLLM. Residues 123-137 form a helical membrane-spanning segment; that stretch reads IPLIMSVLYVWAQLN. The Cytoplasmic portion of the chain corresponds to 138–154; sequence RDMIVSFWFGTRFKACY. The helical transmembrane segment at 155 to 166 threads the bilayer; the sequence is LPWVILGFNYII. Topologically, residues 167 to 170 are lumenal; the sequence is GGSV. Residues 171–189 form a helical membrane-spanning segment; sequence INELIGNLVGHLYFFLMFR. Residues 190-251 lie on the Cytoplasmic side of the membrane; the sequence is YPMDLGGRNF…WGQGFRLGDQ (62 aa). The residue at position 201 (Ser201) is a Phosphoserine. Thr202 is modified (phosphothreonine). Ser226 bears the Phosphoserine mark. Positions 229 to 251 are disordered; that stretch reads RAADQNGGGGRHNWGQGFRLGDQ. The SHP-box signature appears at 241 to 248; the sequence is NWGQGFRL.

The protein belongs to the derlin family. In terms of assembly, homotetramer. The four subunits of the tetramer are arranged in a twofold symmetry. Forms homo- and heterooligomers with DERL2 and DERL3; binding to DERL3 is poorer than that between DERL2 and DERL3. Interacts (via SHP-box motif) with VCP. Interacts with AMFR, SELENOS, SEL1L, SELENOK and SYVN1, as well as with SEL1L-SYVN1 and VCP-SELENOS protein complexes; this interaction is weaker than that observed between DERL2 and these complexes. Interacts with NGLY1 and YOD1. Does not bind to EDEM1. Interacts with DNAJB9. Interacts with RNF103. Interacts with HM13. Interacts with XBP1 isoform 1 (via luminal/ectodomain domain); the interaction obviates the need for ectodomain shedding prior HM13/SPP-mediated XBP1 isoform 1 cleavage. Interacts with the signal recognition particle/SRP and the SRP receptor; in the process of endoplasmic reticulum stress-induced pre-emptive quality control. May interact with UBXN6. Interacts with ZFAND2B; probably through VCP. Interacts with CCDC47. Interacts with C18orf32. May interact with TRAM1. Forms a complex with SVIP and VCP/p97.

It localises to the endoplasmic reticulum membrane. Functional component of endoplasmic reticulum-associated degradation (ERAD) for misfolded lumenal proteins. Forms homotetramers which encircle a large channel traversing the endoplasmic reticulum (ER) membrane. This allows the retrotranslocation of misfolded proteins from the ER into the cytosol where they are ubiquitinated and degraded by the proteasome. The channel has a lateral gate within the membrane which provides direct access to membrane proteins with no need to reenter the ER lumen first. May mediate the interaction between VCP and the misfolded protein. Also involved in endoplasmic reticulum stress-induced pre-emptive quality control, a mechanism that selectively attenuates the translocation of newly synthesized proteins into the endoplasmic reticulum and reroutes them to the cytosol for proteasomal degradation. By controlling the steady-state expression of the IGF1R receptor, indirectly regulates the insulin-like growth factor receptor signaling pathway. The chain is Derlin-1 from Pongo abelii (Sumatran orangutan).